Consider the following 92-residue polypeptide: Defensin-like protein 249 (92 aa).

The first 24 residues, 1-24 (MKLAAIFLASSVLLSLLPIHLSQG), serve as a signal peptide directing secretion. Intrachain disulfides connect Cys34-Cys91, Cys45-Cys74, Cys53-Cys84, and Cys72-Cys86.

Belongs to the DEFL family.

The protein resides in the secreted. The chain is Defensin-like protein 249 (SCRL7) from Arabidopsis thaliana (Mouse-ear cress).